A 2559-amino-acid chain; its full sequence is Nonribosomal peptide synthetase asqK (2559 aa).

The segment at 90–474 is adenylation 1; sequence YRPSHTAIHA…SRKDSQVKIR (385 aa). One can recognise a Carrier 1 domain in the interval 593–669; the sequence is TNIEQLVHEL…SLVHYPAGLE (77 aa). An O-(pantetheine 4'-phosphoryl)serine modification is found at Ser627. The interval 695–989 is condensation 1; that stretch reads TVEQSFSQAR…GNVQCIRTKV (295 aa). Positions 1155–1562 are adenylation 2; that stretch reads FDEQVRAQTD…GRMDQQVKVR (408 aa). The methyltransferase stretch occupies residues 1681 to 1776; sequence LEIGTGSGMI…NTIKDLVRQG (96 aa). The Carrier 2 domain occupies 2090–2164; the sequence is AFTSEIERAV…GLAQHLQGLG (75 aa). Ser2124 is modified (O-(pantetheine 4'-phosphoryl)serine). The segment at 2261–2409 is condensation 2; that stretch reads FDGVSLSAIL…VNRCLLRVKV (149 aa).

This sequence belongs to the NRP synthetase family.

It carries out the reaction O-methyl-L-tyrosine + anthranilate + S-adenosyl-L-methionine + 2 ATP = (-)-4'-methoxycyclopeptine + 2 AMP + S-adenosyl-L-homocysteine + 2 diphosphate + 2 H(+). The catalysed reaction is anthranilate + L-phenylalanine + S-adenosyl-L-methionine + 2 ATP = cyclopeptine + 2 AMP + S-adenosyl-L-homocysteine + 2 diphosphate + 2 H(+). The protein operates within secondary metabolite biosynthesis. It functions in the pathway alkaloid biosynthesis. It participates in mycotoxin biosynthesis. Functionally, nonribosomal peptide synthetase; part of the gene cluster that mediates the biosynthesis of the aspoquinolone mycotoxins. The first stage is catalyzed by the nonribosomal peptide synthetase asqK that condenses anthranilic acid and O-methyl-L-tyrosine to produce 4'-methoxycyclopeptin. AsqK is also able to use anthranilic acid and L-phenylalanine as substrates to produce cyclopeptin, but at a tenfold lower rate. Within the pathway, 4'-methoxycyclopeptin is then converted to 4'-methoxydehydrocyclopeptin by the ketoglutarate-dependent dioxygenase asqJ. AsqJ also converts its first product 4'-methoxydehydrocyclopeptin to 4'-methoxycyclopenin. The following conversion of 4'-methoxycyclopenin into 4'-methoxyviridicatin is catalyzed by the cyclopenase asqI. 4'-methoxyviridicatin is the precursor of quinolone natural products, and is further converted to quinolinone B. The prenyltransferase asqH1 then catalyzes the canonical Friedel-Crafts alkylation of quinolinone B with dimethylallyl cation to yield dimethylallyl quinolone, which is subjected to FAD-dependent dehydrogenation by the FAD-linked oxidoreductase asqF to yield conjugated aryl diene. The delta(3') double bond then serves as the site of the second alkylation with DMAPP catalyzed by the prenyltransferase asqH2 to yield a carbenium ion intermediate, which can be attacked by H(2)O to yield a styrenyl quinolone containing a C3'-hydroxyprenyl chain. The FAD-dependent monooxygenase asqG performs epoxidation of the terminal C7'-C8' olefin. Finally, after dehydratation of the epoxide at C3 by asqC, the quinolone epoxide rearrangement protein asqO catalyzes an enzymatic 3-exo-tet cyclization to yield the cyclopropyl-THF ring system in aspoquinolone. This chain is Nonribosomal peptide synthetase asqK, found in Emericella nidulans (strain FGSC A4 / ATCC 38163 / CBS 112.46 / NRRL 194 / M139) (Aspergillus nidulans).